Consider the following 156-residue polypeptide: Endogenous retrovirus group K member 9 Pro protein (156 aa).

The region spanning 21 to 96 (FEGLVDTGAD…IPLNLWGRDL (76 aa)) is the Peptidase A2 domain. Aspartate 26 is an active-site residue. Residues 111-156 (YSPTSQKIMTKRGYIPGKGLGKNEDGIKIPFEAKINQKREGIGYPF) form the G-patch domain.

Belongs to the peptidase A2 family. HERV class-II K(HML-2) subfamily. In terms of assembly, active as a homodimer. In terms of processing, autoproteolytically processed at the N-terminus. Expected C-terminal autoprocessing not detected. The sequence shown is that of the processed Pro protein.

It carries out the reaction Processing at the authentic HIV-1 PR recognition site and release of the mature p17 matrix and the p24 capsid protein, as a result of the cleavage of the -SQNY-|-PIVQ- cleavage site.. Its function is as follows. Retroviral proteases have roles in the processing of the primary translation products and the maturation of the viral particle. Endogenous Pro proteins may have kept, lost or modified their original function during evolution. This is Endogenous retrovirus group K member 9 Pro protein (ERVK-9) from Homo sapiens (Human).